We begin with the raw amino-acid sequence, 2432 residues long: uncharacterized protein (2432 aa).

It belongs to the IIV-6 261R/396L/443R family.

This is an uncharacterized protein from Invertebrate iridescent virus 6 (IIV-6).